Reading from the N-terminus, the 51-residue chain is Sperm protamine P1 (51 aa).

Belongs to the protamine P1 family. As to expression, testis.

It is found in the nucleus. The protein localises to the chromosome. Protamines substitute for histones in the chromatin of sperm during the haploid phase of spermatogenesis. They compact sperm DNA into a highly condensed, stable and inactive complex. The sequence is that of Sperm protamine P1 (PRM1) from Trachypithecus johnii (Nilgiri langur).